The primary structure comprises 706 residues: Centrosomal protein kizuna (706 aa).

Positions glutamine 63–lysine 113 form a coiled coil. The span at threonine 105–serine 116 shows a compositional bias: basic residues. Disordered regions lie at residues threonine 105 to histidine 184, valine 215 to glycine 347, glutamate 571 to valine 603, serine 620 to proline 665, and glutamate 677 to aspartate 706. Residues glycine 118–serine 127 are compositionally biased toward basic and acidic residues. Polar residues-rich tracts occupy residues arginine 128–alanine 156 and histidine 164–glycine 180. Basic and acidic residues predominate over residues valine 215–valine 251. A compositionally biased stretch (low complexity) spans threonine 272–serine 283. Acidic residues predominate over residues glycine 293–aspartate 304. A compositionally biased stretch (polar residues) spans proline 308 to isoleucine 320. Residues glutamate 586 to alanine 598 are compositionally biased toward acidic residues. Positions proline 638–valine 648 are enriched in basic and acidic residues.

The protein belongs to the kizuna family.

The protein localises to the cytoplasm. The protein resides in the cytoskeleton. It localises to the microtubule organizing center. It is found in the centrosome. Its subcellular location is the cilium basal body. In terms of biological role, centrosomal protein required for establishing a robust mitotic centrosome architecture that can endure the forces that converge on the centrosomes during spindle formation. Required for stabilizing the expanded pericentriolar material around the centriole. The polypeptide is Centrosomal protein kizuna (kiz) (Danio rerio (Zebrafish)).